We begin with the raw amino-acid sequence, 913 residues long: Alanine--tRNA ligase (913 aa).

The Zn(2+) site is built by His-600, His-604, Cys-703, and His-707.

The protein belongs to the class-II aminoacyl-tRNA synthetase family. It depends on Zn(2+) as a cofactor.

The protein resides in the cytoplasm. The enzyme catalyses tRNA(Ala) + L-alanine + ATP = L-alanyl-tRNA(Ala) + AMP + diphosphate. Its function is as follows. Catalyzes the attachment of alanine to tRNA(Ala) in a two-step reaction: alanine is first activated by ATP to form Ala-AMP and then transferred to the acceptor end of tRNA(Ala). Also edits incorrectly charged Ser-tRNA(Ala) and Gly-tRNA(Ala) via its editing domain. The polypeptide is Alanine--tRNA ligase (Methanothrix thermoacetophila (strain DSM 6194 / JCM 14653 / NBRC 101360 / PT) (Methanosaeta thermophila)).